The sequence spans 137 residues: Large ribosomal subunit protein uL16 (137 aa).

The protein belongs to the universal ribosomal protein uL16 family. Part of the 50S ribosomal subunit.

In terms of biological role, binds 23S rRNA and is also seen to make contacts with the A and possibly P site tRNAs. This chain is Large ribosomal subunit protein uL16, found in Lawsonia intracellularis (strain PHE/MN1-00).